We begin with the raw amino-acid sequence, 505 residues long: Catalase (505 aa).

Residues histidine 58 and asparagine 131 contribute to the active site. Residue tyrosine 341 coordinates heme.

This sequence belongs to the catalase family. Requires heme as cofactor.

The enzyme catalyses 2 H2O2 = O2 + 2 H2O. In terms of biological role, decomposes hydrogen peroxide into water and oxygen; serves to protect cells from the toxic effects of hydrogen peroxide. This chain is Catalase (kat), found in Methanosarcina barkeri (strain Fusaro / DSM 804).